We begin with the raw amino-acid sequence, 521 residues long: UPF0053 protein BU323 (521 aa).

The next 7 membrane-spanning stretches (helical) occupy residues 13–33 (LLTL…FVAI), 49–69 (IGLG…SWIV), 80–100 (FFSL…LLFK), 125–145 (FWAV…DAII), 150–170 (MVNQ…LMLL), 185–205 (VVVL…TEAL), and 207–227 (FCIP…IEIF). CBS domains follow at residues 311 to 370 (MTPR…KIDA) and 374 to 434 (SSKI…DADE).

This sequence belongs to the UPF0053 family.

It is found in the cell membrane. In Buchnera aphidicola subsp. Acyrthosiphon pisum (strain APS) (Acyrthosiphon pisum symbiotic bacterium), this protein is UPF0053 protein BU323.